A 762-amino-acid chain; its full sequence is Primary amine oxidase, lung isozyme (762 aa).

The N-terminal stretch at 1–16 (MFIFIFLSLWTLLVMG) is a signal peptide. The tract at residues 23-54 (GSEEGVGKQCHPSLPPRCPSRSPSDQPWTHPD) is disordered. N-linked (GlcNAc...) asparagine glycosylation occurs at N136. C197 and C198 are oxidised to a cystine. O-linked (GalNAc...) threonine glycosylation is present at T211. N-linked (GlcNAc...) asparagine glycosylation is found at N231 and N293. 383–393 (YMDACFGMGKF) provides a ligand contact to substrate. The active-site Proton acceptor is D385. A disulfide bridge links C403 with C429. Substrate is bound at residue 467 to 472 (LLNYDY). The Schiff-base intermediate with substrate; via topaquinone role is filled by Y470. A 2',4',5'-topaquinone modification is found at Y470. H519 and H521 together coordinate Cu cation. Positions 528, 529, 530, and 571 each coordinate Ca(2+). 577-584 (PLGGGSPR) provides a ligand contact to heparin. An N-linked (GlcNAc...) asparagine glycan is attached at N617. F662 and N664 together coordinate Ca(2+). Residue N665 is glycosylated (N-linked (GlcNAc...) asparagine). 3 residues coordinate Ca(2+): E666, D672, and L673. Residue H683 coordinates Cu cation. The cysteines at positions 733 and 740 are disulfide-linked.

Belongs to the copper/topaquinone oxidase family. As to quaternary structure, homodimer; disulfide-linked. Cu cation is required as a cofactor. Requires Ca(2+) as cofactor. L-topaquinone serves as cofactor. In terms of processing, topaquinone (TPQ) is generated by copper-dependent autoxidation of a specific tyrosyl residue. In terms of tissue distribution, expressed in lung, spleen, heart and kidney.

It localises to the secreted. Its subcellular location is the extracellular space. It carries out the reaction a primary methyl amine + O2 + H2O = an aldehyde + H2O2 + NH4(+). In Bos taurus (Bovine), this protein is Primary amine oxidase, lung isozyme.